The chain runs to 246 residues: MTNNAAAPLYSLRGLPLIGWRDMSHALNYLFADGQLKQGTLVAINAEKLLTAEDNPEVRALIGAAEFKYADGISVVRSIRKKFPQAQVSRVAGADLWEALMARAGKEGTPVFLVGGKPEVLAQTEAKLRTQWNVNIVGSQDGYFTPEQRQALFARIHASGAKIVTVAMGSPKQELLMRDCREVHPHALYMGVGGTYDVFTGHVKRAPKIWQNLGLEWLYRLLSQPKRITRQMRLLRYLRWHYTGDL.

This sequence belongs to the glycosyltransferase 26 family.

The enzyme catalyses UDP-N-acetyl-alpha-D-mannosaminouronate + N-acetyl-alpha-D-glucosaminyl-di-trans,octa-cis-undecaprenyl diphosphate = beta-D-ManNAcA-(1-&gt;4)-alpha-D-GlcNAc-di-trans,octa-cis-undecaprenyl diphosphate + UDP + H(+). Its pathway is bacterial outer membrane biogenesis; enterobacterial common antigen biosynthesis. Catalyzes the synthesis of Und-PP-GlcNAc-ManNAcA (Lipid II), the second lipid-linked intermediate involved in enterobacterial common antigen (ECA) synthesis. This chain is UDP-N-acetyl-D-mannosaminuronic acid transferase, found in Salmonella paratyphi A (strain ATCC 9150 / SARB42).